Reading from the N-terminus, the 55-residue chain is Large ribosomal subunit protein bL33 (55 aa).

It belongs to the bacterial ribosomal protein bL33 family.

This Methylobacterium radiotolerans (strain ATCC 27329 / DSM 1819 / JCM 2831 / NBRC 15690 / NCIMB 10815 / 0-1) protein is Large ribosomal subunit protein bL33.